A 268-amino-acid chain; its full sequence is Proenkephalin-A (268 aa).

The signal sequence occupies residues 1–24; that stretch reads MARFLRLCTWLLALGSCLLATVQA. 3 cysteine pairs are disulfide-bonded: Cys26/Cys48, Cys30/Cys52, and Cys33/Cys65. The disordered stretch occupies residues 163 to 184; it reads TGDNRAKDSHQQESTNNDEDMS. 2 propeptides span residues 197–208 and 218–228; these read SPQLEDEAKELQ and VGRPEWWMDYQ. Ser252 carries the phosphoserine modification.

The protein belongs to the opioid neuropeptide precursor family. Proenkephalin-A is cleaved by CTSL to generate Met-enkephalin. Post-translationally, processed and degraded by ACE. In terms of processing, probably cleaved by ACE. Processed by ACE to generate Met-enkephalin in the nucleus accumbens of the brain. Post-translationally, the N-terminal domain contains 6 conserved cysteines thought to be involved in disulfide bonding and/or processing. In terms of tissue distribution, spermatogenic and somatic cells.

Its subcellular location is the cytoplasmic vesicle. The protein resides in the secretory vesicle. The protein localises to the chromaffin granule lumen. It is found in the secreted. In terms of biological role, neuropeptide that competes with and mimic the effects of opiate drugs. They play a role in a number of physiologic functions, including pain perception and responses to stress. Its function is as follows. Met-enkephalin-Arg-Phe neuropeptide acts as a strong ligand of Mu-type opioid receptor OPRM1. Met-enkephalin-Arg-Phe-binding to OPRM1 in the nucleus accumbens of the brain increases activation of OPRM1, leading to long-term synaptic depression of glutamate release. Functionally, increases glutamate release in the striatum and decreases GABA concentration in the striatum. Increases glutamate release in the striatum. The protein is Proenkephalin-A (Penk) of Mus musculus (Mouse).